Consider the following 582-residue polypeptide: uncharacterized protein (582 aa).

An N-terminal signal peptide occupies residues 1–27 (MNYAVLPPELNSLRMFTGAGSAPMLAA). The segment covering 241–257 (GNGRAGLPGSGNVGNGN) has biased composition (gly residues). The disordered stretch occupies residues 241-278 (GNGRAGLPGSGNVGNGNLGNSNLGSGNTGNSNVGFGNT). The span at 258-278 (LGNSNLGSGNTGNSNVGFGNT) shows a compositional bias: low complexity.

The protein belongs to the mycobacterial PPE family.

This is an uncharacterized protein from Mycobacterium tuberculosis (strain ATCC 25618 / H37Rv).